Consider the following 132-residue polypeptide: Small ribosomal subunit protein uS8c (132 aa).

The protein belongs to the universal ribosomal protein uS8 family. As to quaternary structure, part of the 30S ribosomal subunit.

It localises to the plastid. The protein resides in the chloroplast. Its function is as follows. One of the primary rRNA binding proteins, it binds directly to 16S rRNA central domain where it helps coordinate assembly of the platform of the 30S subunit. The chain is Small ribosomal subunit protein uS8c (rps8) from Dioscorea elephantipes (Elephant's foot yam).